A 311-amino-acid polypeptide reads, in one-letter code: Ribosomal protein L11 methyltransferase (311 aa).

4 residues coordinate S-adenosyl-L-methionine: T162, G183, D205, and N248.

The protein belongs to the methyltransferase superfamily. PrmA family.

The protein resides in the cytoplasm. The enzyme catalyses L-lysyl-[protein] + 3 S-adenosyl-L-methionine = N(6),N(6),N(6)-trimethyl-L-lysyl-[protein] + 3 S-adenosyl-L-homocysteine + 3 H(+). In terms of biological role, methylates ribosomal protein L11. The protein is Ribosomal protein L11 methyltransferase of Bacillus licheniformis (strain ATCC 14580 / DSM 13 / JCM 2505 / CCUG 7422 / NBRC 12200 / NCIMB 9375 / NCTC 10341 / NRRL NRS-1264 / Gibson 46).